The chain runs to 639 residues: UPF0313 protein CLJ_B0249 (639 aa).

Residues 295–566 (AIKEVKFSIT…RMQRSLLQFS (272 aa)) form the Radical SAM core domain. Cysteine 309, cysteine 313, and cysteine 316 together coordinate [4Fe-4S] cluster. The segment at 597–639 (YNKPYKKSHKKNNAKNKNNNYNKNKDVSKKNKKNSLSKHKKRK) is disordered. 2 stretches are compositionally biased toward basic residues: residues 600–610 (PYKKSHKKNNA) and 626–639 (KNKK…KKRK).

Belongs to the UPF0313 family. [4Fe-4S] cluster is required as a cofactor.

The sequence is that of UPF0313 protein CLJ_B0249 from Clostridium botulinum (strain 657 / Type Ba4).